We begin with the raw amino-acid sequence, 662 residues long: Serine/threonine-protein kinase PTK1/STK1 (662 aa).

Positions 35–119 are disordered; that stretch reads GNKLKKKASL…SSTSRNLSNS (85 aa). A compositionally biased stretch (low complexity) spans 50–60; the sequence is STSTNDSESSS. 2 stretches are compositionally biased toward polar residues: residues 61–91 and 98–119; these read PKLP…SAST and GSST…LSNS. The Protein kinase domain occupies 196-503; sequence DDENKTIGWG…IDDLFEDPWF (308 aa). Residues 202–210 and K226 each bind ATP; that span reads IGWGGSCEV. The Proton acceptor role is filled by D329. Positions 605 to 631 are disordered; that stretch reads TLTLSEEPPATPAPSAPSAPSARVRGH.

It belongs to the protein kinase superfamily. Ser/Thr protein kinase family.

The catalysed reaction is L-seryl-[protein] + ATP = O-phospho-L-seryl-[protein] + ADP + H(+). It catalyses the reaction L-threonyl-[protein] + ATP = O-phospho-L-threonyl-[protein] + ADP + H(+). In terms of biological role, essential determinant for low-affinity spermidine transport. The protein is Serine/threonine-protein kinase PTK1/STK1 (PTK1) of Saccharomyces cerevisiae (strain ATCC 204508 / S288c) (Baker's yeast).